A 406-amino-acid chain; its full sequence is Olfactomedin-like protein 3 (406 aa).

Positions 1–21 (MGPSAPLLLFFLLSWPGSLQG) are cleaved as a signal peptide. Residues 22–101 (QQHHLVEYME…REVDYLETQN (80 aa)) adopt a coiled-coil conformation. One can recognise an Olfactomedin-like domain in the interval 134–401 (DCSYTISQVR…QIVYKLEMKK (268 aa)). Cys135 and Cys328 are disulfide-bonded. Asn248 carries an N-linked (GlcNAc...) asparagine glycan.

The protein belongs to the OLFML3 family.

It localises to the secreted. Functionally, secreted scaffold protein that plays an essential role in dorsoventral patterning during early development. Stabilizes axial formation by restricting chordin (CHRD) activity on the dorsal side. Acts by facilitating the association between the tolloid proteases and their substrate chordin (CHRD), leading to enhance chordin (CHRD) degradation. May have matrix-related function involved in placental and embryonic development, or play a similar role in other physiological processes. This is Olfactomedin-like protein 3 (Olfml3) from Rattus norvegicus (Rat).